Reading from the N-terminus, the 339-residue chain is Heat-inducible transcription repressor HrcA (339 aa).

Belongs to the HrcA family.

In terms of biological role, negative regulator of class I heat shock genes (grpE-dnaK-dnaJ and groELS operons). Prevents heat-shock induction of these operons. The polypeptide is Heat-inducible transcription repressor HrcA (Clostridioides difficile (strain 630) (Peptoclostridium difficile)).